A 293-amino-acid chain; its full sequence is Mitochondrial inner membrane protease atp23 (293 aa).

The tract at residues 1–51 (MSPAPTTSAGPASSGIPPSSLPTSTVTEDDTKPSSSSSKANDLLPRYLTND) is disordered. The segment covering 8-22 (SAGPASSGIPPSSLP) has biased composition (low complexity). His190 is an a divalent metal cation binding site. The active site involves Glu191. A divalent metal cation is bound at residue His194.

Belongs to the peptidase M76 family.

The protein resides in the mitochondrion inner membrane. In terms of biological role, has a dual role in the assembly of mitochondrial ATPase. Acts as a protease that removes N-terminal residues of mitochondrial ATPase CF(0) subunit 6 at the intermembrane space side. Also involved in the correct assembly of the membrane-embedded ATPase CF(0) particle, probably mediating association of subunit 6 with the subunit 9 ring. The protein is Mitochondrial inner membrane protease atp23 (atp23) of Neurospora crassa (strain ATCC 24698 / 74-OR23-1A / CBS 708.71 / DSM 1257 / FGSC 987).